The following is a 417-amino-acid chain: Adenylosuccinate synthetase (417 aa).

GTP-binding positions include 11–17 (GDEGKGK) and 39–41 (GHT). Catalysis depends on Asp-12, which acts as the Proton acceptor. The Mg(2+) site is built by Asp-12 and Gly-39. IMP-binding positions include 12–15 (DEGK), 37–40 (NAGH), Thr-126, Arg-140, Gln-218, Thr-233, and Arg-295. Catalysis depends on His-40, which acts as the Proton donor. Residue 291–297 (TVSGRIR) coordinates substrate. GTP-binding positions include Arg-297, 323-325 (KLD), and 406-408 (SNG).

This sequence belongs to the adenylosuccinate synthetase family. In terms of assembly, homodimer. Mg(2+) serves as cofactor.

It localises to the cytoplasm. It carries out the reaction IMP + L-aspartate + GTP = N(6)-(1,2-dicarboxyethyl)-AMP + GDP + phosphate + 2 H(+). It participates in purine metabolism; AMP biosynthesis via de novo pathway; AMP from IMP: step 1/2. Its function is as follows. Plays an important role in the de novo pathway of purine nucleotide biosynthesis. Catalyzes the first committed step in the biosynthesis of AMP from IMP. This is Adenylosuccinate synthetase from Neorickettsia sennetsu (strain ATCC VR-367 / Miyayama) (Ehrlichia sennetsu).